The following is a 180-amino-acid chain: MKLRFISSALAAALFAATGSYAAVVDGGTIHFEGELVNAACSVNTDSADQVVTLGQYRTDIFNAVGNTSALIPFTIQLNDCDPVVAANAAVAFSGQADAINDNLLAIASSTNTTTATGVGIEILDNTSAILKPDGNSFSTNQNLIPGTNVLHFSARYKGTGTSASAGQANADATFIMRYE.

The first 22 residues, 1–22 (MKLRFISSALAAALFAATGSYA), serve as a signal peptide directing secretion. A disulfide bond links C41 and C81.

Belongs to the fimbrial protein family.

The protein resides in the fimbrium. This is an uncharacterized protein from Escherichia coli O157:H7.